A 1007-amino-acid chain; its full sequence is Probable beta-galactosidase A (1007 aa).

Positions 1–18 (MRLLPVWTAALLAAQAAG) are cleaved as a signal peptide. Positions 96, 140, 141, and 142 each coordinate substrate. Residue Asn156 is glycosylated (N-linked (GlcNAc...) asparagine). Asn199 provides a ligand contact to substrate. Glu200 serves as the catalytic Proton donor. Cysteines 205 and 206 form a disulfide. Residue Tyr260 coordinates substrate. Cys266 and Cys315 are joined by a disulfide. Residue Glu298 is the Nucleophile of the active site. Tyr364 contributes to the substrate binding site. N-linked (GlcNAc...) asparagine glycans are attached at residues Asn405, Asn422, Asn621, Asn740, Asn775, and Asn914.

It belongs to the glycosyl hydrolase 35 family.

It localises to the secreted. It carries out the reaction Hydrolysis of terminal non-reducing beta-D-galactose residues in beta-D-galactosides.. Functionally, cleaves beta-linked terminal galactosyl residues from gangliosides, glycoproteins, and glycosaminoglycans. The sequence is that of Probable beta-galactosidase A (lacA) from Emericella nidulans (strain FGSC A4 / ATCC 38163 / CBS 112.46 / NRRL 194 / M139) (Aspergillus nidulans).